The sequence spans 268 residues: Tryptophan synthase alpha chain (268 aa).

Active-site proton acceptor residues include glutamate 49 and aspartate 60.

Belongs to the TrpA family. As to quaternary structure, tetramer of two alpha and two beta chains.

The catalysed reaction is (1S,2R)-1-C-(indol-3-yl)glycerol 3-phosphate + L-serine = D-glyceraldehyde 3-phosphate + L-tryptophan + H2O. It functions in the pathway amino-acid biosynthesis; L-tryptophan biosynthesis; L-tryptophan from chorismate: step 5/5. The alpha subunit is responsible for the aldol cleavage of indoleglycerol phosphate to indole and glyceraldehyde 3-phosphate. This chain is Tryptophan synthase alpha chain, found in Edwardsiella ictaluri (strain 93-146).